The sequence spans 284 residues: MLVVNNPLVLREQISLWRREGRSIAFVPTMGNLHQGHLTLVEQARSHAEKVVVSIFVNPMQFDKAEDLANYPRTLEEDCAALNAAGVDLVFTPTPEIMYPQGLASQTFVEVPGLSGLLEGALRPGHFRGVSTVVTKLFNLVQPDVACFGQKDYQQLALIRKMVADMAMPIEIVGVPTVRAEDGLALSSRNGYLTTAERALAPELARTMNWIAEQIEGGDHHLPSLVAQASQRLDNAGFRTDAIDIVDATTLESATDKSRHLVILMAAYLGKARLIDNRVVMLSA.

30-37 (MGNLHQGH) contributes to the ATP binding site. His37 functions as the Proton donor in the catalytic mechanism. Gln61 is a (R)-pantoate binding site. Residue Gln61 participates in beta-alanine binding. Residue 149 to 152 (GQKD) coordinates ATP. Residue Gln155 coordinates (R)-pantoate. ATP is bound by residues Val178 and 186 to 189 (LSSR).

The protein belongs to the pantothenate synthetase family. Homodimer.

Its subcellular location is the cytoplasm. The enzyme catalyses (R)-pantoate + beta-alanine + ATP = (R)-pantothenate + AMP + diphosphate + H(+). The protein operates within cofactor biosynthesis; (R)-pantothenate biosynthesis; (R)-pantothenate from (R)-pantoate and beta-alanine: step 1/1. In terms of biological role, catalyzes the condensation of pantoate with beta-alanine in an ATP-dependent reaction via a pantoyl-adenylate intermediate. This Aeromonas salmonicida (strain A449) protein is Pantothenate synthetase.